We begin with the raw amino-acid sequence, 436 residues long: 3-ketoacyl-CoA thiolase (436 aa).

The Acyl-thioester intermediate role is filled by Cys99. Residues His392 and Cys422 each act as proton acceptor in the active site.

The protein belongs to the thiolase-like superfamily. Thiolase family. As to quaternary structure, heterotetramer of two alpha chains (FadJ) and two beta chains (FadI).

It is found in the cytoplasm. The catalysed reaction is an acyl-CoA + acetyl-CoA = a 3-oxoacyl-CoA + CoA. The protein operates within lipid metabolism; fatty acid beta-oxidation. Its function is as follows. Catalyzes the final step of fatty acid oxidation in which acetyl-CoA is released and the CoA ester of a fatty acid two carbons shorter is formed. This Pseudoalteromonas translucida (strain TAC 125) protein is 3-ketoacyl-CoA thiolase.